The primary structure comprises 320 residues: ATP-dependent 6-phosphofructokinase (320 aa).

Gly12 contributes to the ATP binding site. 22–26 provides a ligand contact to ADP; sequence RGVVR. Residues 73 to 74 and 103 to 106 contribute to the ATP site; these read RF and GDGS. Asp104 contributes to the Mg(2+) binding site. Position 126–128 (126–128) interacts with substrate; sequence TID. Residue Asp128 is the Proton acceptor of the active site. Arg155 serves as a coordination point for ADP. Substrate contacts are provided by residues Arg163 and 170-172; that span reads MGR. ADP-binding positions include 186–188, Lys212, and 214–216; these read GCE and KKH. Substrate contacts are provided by residues Glu223, Arg244, and 250–253; that span reads HIQR.

It belongs to the phosphofructokinase type A (PFKA) family. ATP-dependent PFK group I subfamily. Prokaryotic clade 'B1' sub-subfamily. In terms of assembly, homotetramer. Requires Mg(2+) as cofactor.

It is found in the cytoplasm. It carries out the reaction beta-D-fructose 6-phosphate + ATP = beta-D-fructose 1,6-bisphosphate + ADP + H(+). It functions in the pathway carbohydrate degradation; glycolysis; D-glyceraldehyde 3-phosphate and glycerone phosphate from D-glucose: step 3/4. Allosterically activated by ADP and other diphosphonucleosides, and allosterically inhibited by phosphoenolpyruvate. In terms of biological role, catalyzes the phosphorylation of D-fructose 6-phosphate to fructose 1,6-bisphosphate by ATP, the first committing step of glycolysis. The polypeptide is ATP-dependent 6-phosphofructokinase (Edwardsiella ictaluri (strain 93-146)).